The primary structure comprises 397 residues: Subtilisin-like serine protease Pen ch 13.0101 (397 aa).

Positions 1 to 19 (MGFLKVLATSLATLAVVDA) are cleaved as a signal peptide. A propeptide spans 20–115 (GTLLTASNTD…IEPDMIVNAT (96 aa)) (removed in mature form). Residues 35-113 (SYIVVMNDDV…KYIEPDMIVN (79 aa)) form the Inhibitor I9 domain. Asparagine 113 carries N-linked (GlcNAc...) asparagine glycosylation. The Peptidase S8 domain occupies 125 to 397 (SWGLARISSK…SKLLYNGINV (273 aa)). Residues aspartate 157 and histidine 188 each act as charge relay system in the active site. N-linked (GlcNAc...) asparagine glycans are attached at residues asparagine 249 and asparagine 284. Serine 343 acts as the Charge relay system in catalysis.

Belongs to the peptidase S8 family.

The protein localises to the secreted. In terms of biological role, serine protease. This is Subtilisin-like serine protease Pen ch 13.0101 from Penicillium rubens.